The sequence spans 268 residues: uncharacterized protein (268 aa).

The helical transmembrane segment at 150 to 172 (LYSIADFLAYTFTYFYLATVGLA) threads the bilayer.

It is found in the host membrane. This is an uncharacterized protein from Sulfolobus islandicus rod-shaped virus 1 (SIRV-1).